The chain runs to 197 residues: Endothelial cell-specific chemotaxis regulator (197 aa).

An N-terminal signal peptide occupies residues 1–23; that stretch reads MGSVRETQLRWAILGFLLLQAAS. Residues 24–113 lie on the Extracellular side of the membrane; the sequence is ETPSQFSTEA…PSPTSETVLT (90 aa). The tract at residues 40–107 is disordered; the sequence is TVADHLPSSP…ADSTVPPSPT (68 aa). Polar residues predominate over residues 50–63; that stretch reads GPTWSQSQKHTSGL. A compositionally biased stretch (low complexity) spans 64–82; sequence SADVPSSGRSSDSMSGDTS. Polar residues predominate over residues 83-107; the sequence is HNVTSTSPNMSFRTTADSTVPPSPT. A helical membrane pass occupies residues 114-134; the sequence is VAAFGVISFIAILVVVVIVLV. The Cytoplasmic portion of the chain corresponds to 135–197; sequence SVVSLRFKCR…KGCPSAEKVL (63 aa). Disordered regions lie at residues 146–172 and 178–197; these read NKES…GEKE and SMKN…EKVL. 2 stretches are compositionally biased toward polar residues: residues 155–168 and 178–189; these read PGSS…STAN and SMKNINMNNSKG. The residue at position 187 (Ser187) is a Phosphoserine.

Belongs to the ECSCR family. In terms of assembly, interacts with FLNA. Interacts with the 20S proteasome subunit PSMA7. Post-translationally, may be heavily O-glycosylated.

It localises to the cell membrane. The protein resides in the cytoplasm. In terms of biological role, regulates endothelial chemotaxis and tube formation. Has a role in angiogenesis and apoptosis via modulation of the actin cytoskeleton and facilitation of proteasomal degradation of the apoptosis inhibitors BIRC3/IAP1 and BIRC2/IAP2. The chain is Endothelial cell-specific chemotaxis regulator (ECSCR) from Bos taurus (Bovine).